The chain runs to 135 residues: Ribonuclease VapC5 (135 aa).

A PINc domain is found at 9–130 (VLDTSVFIAT…FAALDGAASV (122 aa)). Positions 11 and 100 each coordinate Mg(2+).

The protein belongs to the PINc/VapC protein family. As to quaternary structure, forms a complex with VapB5. Mg(2+) serves as cofactor.

It is found in the secreted. Functionally, probable toxic component of a type II toxin-antitoxin (TA) system. The cognate antitoxin is VapB5. Has limited RNase activity on substrates; activity is seen with a VapC5-VapB5 complex. The chain is Ribonuclease VapC5 from Mycobacterium tuberculosis (strain ATCC 25618 / H37Rv).